A 205-amino-acid chain; its full sequence is ATP synthase subunit b (205 aa).

Residues 51–69 (FAWRCLDFAVLLAIVVWAL) form a helical membrane-spanning segment.

The protein belongs to the ATPase B chain family. F-type ATPases have 2 components, F(1) - the catalytic core - and F(0) - the membrane proton channel. F(1) has five subunits: alpha(3), beta(3), gamma(1), delta(1), epsilon(1). F(0) has three main subunits: a(1), b(2) and c(10-14). The alpha and beta chains form an alternating ring which encloses part of the gamma chain. F(1) is attached to F(0) by a central stalk formed by the gamma and epsilon chains, while a peripheral stalk is formed by the delta and b chains.

It is found in the cell inner membrane. In terms of biological role, f(1)F(0) ATP synthase produces ATP from ADP in the presence of a proton or sodium gradient. F-type ATPases consist of two structural domains, F(1) containing the extramembraneous catalytic core and F(0) containing the membrane proton channel, linked together by a central stalk and a peripheral stalk. During catalysis, ATP synthesis in the catalytic domain of F(1) is coupled via a rotary mechanism of the central stalk subunits to proton translocation. Component of the F(0) channel, it forms part of the peripheral stalk, linking F(1) to F(0). In Geotalea uraniireducens (strain Rf4) (Geobacter uraniireducens), this protein is ATP synthase subunit b.